The sequence spans 87 residues: Small ribosomal subunit protein bS20 (87 aa).

This sequence belongs to the bacterial ribosomal protein bS20 family.

Functionally, binds directly to 16S ribosomal RNA. The polypeptide is Small ribosomal subunit protein bS20 (Roseobacter denitrificans (strain ATCC 33942 / OCh 114) (Erythrobacter sp. (strain OCh 114))).